A 1288-amino-acid polypeptide reads, in one-letter code: Structural maintenance of chromosomes protein 4 (1288 aa).

The span at 1-10 (MPRKGTQPST) shows a compositional bias: polar residues. The tract at residues 1–55 (MPRKGTQPSTARRREEGPPPPSPDGASSDAEPEPPSGRTESPATAAETASEELDN) is disordered. S22 and S28 each carry phosphoserine. Position 39 is a phosphothreonine (T39). The segment covering 39–48 (TESPATAAET) has biased composition (low complexity). A phosphoserine mark is found at S41 and S50. 113 to 120 (GPNGSGKS) lines the ATP pocket. S143 carries the phosphoserine modification. Residues 272-588 (RRVEILNEHR…LFQKVEEAKS (317 aa)) are a coiled coil. An N6-acetyllysine mark is found at K381 and K679. Positions 613–727 (PGIYGRLGDL…ADNLDQATRV (115 aa)) constitute an SMC hinge domain. Residues 767 to 1020 (LVIEISEEEV…ALSIKLKLEQ (254 aa)) are a coiled coil. 2 positions are modified to phosphoserine: S982 and S1056. A coiled-coil region spans residues 1109–1129 (ELDKITYERDSFRQAYEDLRK).

Belongs to the SMC family. SMC4 subfamily. Forms a heterodimer with SMC2. Component of the condensin complex, which contains the SMC2 and SMC4 heterodimer, and three non SMC subunits that probably regulate the complex: BRRN1/CAPH, CNAP1/CAPD2 and CAPG. Widely expressed. Higher expression in testis, colon, thymus.

The protein localises to the nucleus. The protein resides in the cytoplasm. It localises to the chromosome. Central component of the condensin complex, a complex required for conversion of interphase chromatin into mitotic-like condense chromosomes. The condensin complex probably introduces positive supercoils into relaxed DNA in the presence of type I topoisomerases and converts nicked DNA into positive knotted forms in the presence of type II topoisomerases. In Homo sapiens (Human), this protein is Structural maintenance of chromosomes protein 4 (SMC4).